A 229-amino-acid polypeptide reads, in one-letter code: Potassium/proton antiporter CemA (229 aa).

The next 3 membrane-spanning stretches (helical) occupy residues 6–26 (AFIPFFYFTSIVFLPWLISLC), 107–127 (ILHFSTNLISFVILSGYSFWG), and 189–209 (ILSGLVSTFPVILDTIFKYWI).

The protein belongs to the CemA family.

The protein resides in the plastid. It localises to the chloroplast inner membrane. The enzyme catalyses K(+)(in) + H(+)(out) = K(+)(out) + H(+)(in). In terms of biological role, contributes to K(+)/H(+) antiport activity by supporting proton efflux to control proton extrusion and homeostasis in chloroplasts in a light-dependent manner to modulate photosynthesis. Prevents excessive induction of non-photochemical quenching (NPQ) under continuous-light conditions. Indirectly promotes efficient inorganic carbon uptake into chloroplasts. This chain is Potassium/proton antiporter CemA, found in Olimarabidopsis pumila (Dwarf rocket).